Consider the following 224-residue polypeptide: TM2 domain-containing protein amaretto (224 aa).

Positions 1 to 18 are cleaved as a signal peptide; that stretch reads MRIFYGLLAFLVARQHDA. Over 19-154 the chain is Extracellular; the sequence is QAIQARSDKE…FLRAGVPCVR (136 aa). Asparagine 102 and asparagine 142 each carry an N-linked (GlcNAc...) asparagine glycan. A helical transmembrane segment spans residues 155–175; it reads YTDHYFVTTLIYSMLLGFLGM. In terms of domain architecture, TM2 spans 157–205; the sequence is DHYFVTTLIYSMLLGFLGMDRFCLGQTGTAVGKLLTMGGVGVWWIIDVI. The Cytoplasmic portion of the chain corresponds to 176-189; that stretch reads DRFCLGQTGTAVGK. Residues 190 to 210 traverse the membrane as a helical segment; the sequence is LLTMGGVGVWWIIDVILLITN. The Extracellular portion of the chain corresponds to 211–224; the sequence is NLLPEDGSNWNPYV.

This sequence belongs to the TM2 family.

The protein resides in the membrane. Functionally, positive regulator of Notch signaling. Maternal neurogenic factor involved in Notch signaling-dependent neuroectodermal specification during early embryogenesis. Functions cooperatively with amx/TM2D3 and bisc/TM2D1. The polypeptide is TM2 domain-containing protein amaretto (Drosophila melanogaster (Fruit fly)).